The chain runs to 339 residues: NADP-dependent dehydrogenase M3 (339 aa).

Residues Ser49, Ile51, Asp93, Tyr206, Lys210, Ile240, and Gln244 each coordinate NADP(+). Residue Tyr206 is the Proton acceptor of the active site. The Lowers pKa of active site Tyr role is filled by Lys210.

It belongs to the short-chain dehydrogenases/reductases (SDR) family. Homodimer.

The protein resides in the cytoplasm. It localises to the cytosol. It functions in the pathway secondary metabolite biosynthesis. Its function is as follows. NADP-dependent dehydrogenase; part of the gene cluster that mediates the biosynthesis of squalestatin S1 (SQS1, also known as zaragozic acid A), a heavily oxidized fungal polyketide that offers potent cholesterol lowering activity by targeting squalene synthase (SS). SQS1 is composed of a 2,8-dioxobicyclic[3.2.1]octane-3,4,5-tricarboxyclic acid core that is connected to two lipophilic polyketide arms. These initial steps feature the priming of an unusual benzoic acid starter unit onto the highly reducing polyketide synthase pks2, followed by oxaloacetate extension and product release to generate a tricarboxylic acid containing product. The phenylalanine ammonia lyase (PAL) M7 and the acyl-CoA ligase M9 are involved in transforming phenylalanine into benzoyl-CoA. The citrate synthase-like protein R3 is involved in connecting the C-alpha-carbons of the hexaketide chain and oxaloacetate to afford the tricarboxylic acid unit. The potential hydrolytic enzymes, M8 and M10, are in close proximity to pks2 and may participate in product release. On the other side, the tetraketide arm is synthesized by a the squalestatin tetraketide synthase pks1 and enzymatically esterified to the core in the last biosynthetic step, by the acetyltransferase M4. The biosynthesis of the tetraketide must involve 3 rounds of chain extension. After the first and second rounds methyl-transfer occurs, and in all rounds of extension the ketoreductase and dehydratase are active. The enoyl reductase and C-MeT of pks1 are not active in the final round of extension. The acetyltransferase M4 appears to have a broad substrate selectivity for its acyl CoA substrate, allowing the in vitro synthesis of novel squalestatins. The biosynthesis of SQS1 requires several oxidative steps likely performed by oxidoreductases M1, R1 and R2. Finally, in support of the identification of the cluster as being responsible for SQS1 production, the cluster contains a gene encoding a putative squalene synthase (SS) R6, suggesting a likely mechanism for self-resistance. In Phoma sp. (strain ATCC 20986 / MF5453), this protein is NADP-dependent dehydrogenase M3.